A 281-amino-acid chain; its full sequence is LC-AMP precursor 3 (281 aa).

Positions 1 to 19 (MKYTIIPFLLLVALTCATA) are cleaved as a signal peptide. A propeptide spanning residues 20–56 (RSIDGSEKEVQEIREETPSSNEDVPFSLSANEDEEAR) is cleaved from the precursor. At leucine 74 the chain carries Leucine amide. Positions 75-89 (GREESLSANEDEEAR) are excised as a propeptide. Serine amide is present on serine 114. The propeptide occupies 115–129 (GREESFSANEDEEER). Leucine 147 is subject to Leucine amide. Positions 148-162 (GREESISANEDEETR) are excised as a propeptide. Leucine 180 bears the Leucine amide mark. Residues 181–195 (GREESLSAIEDEEAR) constitute a propeptide that is removed on maturation. Leucine 213 bears the Leucine amide mark. A propeptide spanning residues 214–228 (GREESLSANEDEEAR) is cleaved from the precursor. At leucine 246 the chain carries Leucine amide. Positions 247–261 (GREESLSANEDEEAR) are excised as a propeptide. A Leucine amide modification is found at leucine 279.

As to expression, expressed by the venom gland.

The protein localises to the secreted. Its function is as follows. Antimicrobial peptide that acts by influencing bacterial cell membrane permeability at low concentrations and by directly disrupting structure-function at high concentrations. Shows activity against Gram-negative bacteria (S.typhimurium CGMCC 1.1174 (MIC=2.5 uM), E.coli CCTCC AB 2018675 (MIC=5 uM), S.dysenteriae CGMCC 1.1869 (MIC=2.5 uM), P.aeruginosa CGMCC 1.596 (MIC 5-10 uM), K.pneumoniae (MIC=10 uM), A.baumannii (MIC=5-10 uM)), and Gram-positive bacteria (S.aureus CMCC 26003 or MRSA ATCC 43300 (MIC=5 uM), and E.faecium (MIC=2.5-5 uM)). Inhibits biofilm formation of E.coli and S.aureus in a dose-dependent manner and disrupts established biofilms. Demonstrates minimal bacterial resistance, excellent stability, negligible mammalian cell toxicity, low hemolytic activity, and appropriate selectivity for both normal and tumor cells. When combined with traditional antibiotics, exhibits additive or synergistic therapeutic effects. In vivo, in a neutropenic mouse thigh infection model, exhibits a therapeutic effect in inhibiting bacterial proliferation. This chain is LC-AMP precursor 3, found in Lycosa coelestis (Wolf spider).